We begin with the raw amino-acid sequence, 137 residues long: Large ribosomal subunit protein uL16c (137 aa).

The protein belongs to the universal ribosomal protein uL16 family. Part of the 50S ribosomal subunit.

The protein localises to the plastid. The protein resides in the chloroplast. This is Large ribosomal subunit protein uL16c from Vigna unguiculata (Cowpea).